The sequence spans 447 residues: UPF0210 protein LCK_00974 (447 aa).

This sequence belongs to the UPF0210 family. Homodimer.

The protein is UPF0210 protein LCK_00974 of Leuconostoc citreum (strain KM20).